The sequence spans 185 residues: dTDP-4-dehydrorhamnose 3,5-epimerase (185 aa).

Residues Arg23, Glu28, 47–49 (QDN), and Arg59 each bind substrate. His62 functions as the Proton acceptor in the catalytic mechanism. Positions 72 and 119 each coordinate substrate. Tyr132 serves as the catalytic Proton donor. Residues Asp143 and Lys168 each coordinate substrate.

Belongs to the dTDP-4-dehydrorhamnose 3,5-epimerase family. As to quaternary structure, homodimer.

It carries out the reaction dTDP-4-dehydro-6-deoxy-alpha-D-glucose = dTDP-4-dehydro-beta-L-rhamnose. Its pathway is carbohydrate biosynthesis; dTDP-L-rhamnose biosynthesis. The protein operates within bacterial outer membrane biogenesis; LPS O-antigen biosynthesis. Its function is as follows. Catalyzes the epimerization of the C3' and C5'positions of dTDP-6-deoxy-D-xylo-4-hexulose, forming dTDP-6-deoxy-L-lyxo-4-hexulose. The chain is dTDP-4-dehydrorhamnose 3,5-epimerase (rfbC) from Escherichia coli (strain K12).